The primary structure comprises 268 residues: Urease accessory protein UreD (268 aa).

It belongs to the UreD family. UreD, UreF and UreG form a complex that acts as a GTP-hydrolysis-dependent molecular chaperone, activating the urease apoprotein by helping to assemble the nickel containing metallocenter of UreC. The UreE protein probably delivers the nickel.

Its subcellular location is the cytoplasm. Required for maturation of urease via the functional incorporation of the urease nickel metallocenter. The protein is Urease accessory protein UreD of Lysinibacillus sphaericus (strain C3-41).